A 318-amino-acid polypeptide reads, in one-letter code: MEGNQTWITDITLLGFQVGPALAILLCGLFSVFYTLTLLGNGVIFGIICLDSKLHTPMYFFLSHLAIIDMSYASNNVPKMLANLMNQKRTISFVPCIMQTFLYLAFAVTECLILVVMSYDRYVAICHPFQYTVIMSWRVCTILVLTSWSCGFALSLVHEILLLRLPFCGPRDVNHLFCEILSVLKLACADTWVNQVVIFATCVFVLVGPLSLILVSYMHILGAILKIQTKEGRIKAFSTCSSHLCVVGLFFGIAMVVYMVPDSNQREEQEKMLSLFHSVFNPMLNPLIYSLRNAQLKGALHRALQRKRSMRTVYGLCL.

The Extracellular segment spans residues 1–24; it reads MEGNQTWITDITLLGFQVGPALAI. N4 carries an N-linked (GlcNAc...) asparagine glycan. A helical membrane pass occupies residues 25–48; sequence LLCGLFSVFYTLTLLGNGVIFGII. At 49 to 56 the chain is on the cytoplasmic side; it reads CLDSKLHT. A helical membrane pass occupies residues 57-78; the sequence is PMYFFLSHLAIIDMSYASNNVP. Topologically, residues 79–99 are extracellular; the sequence is KMLANLMNQKRTISFVPCIMQ. The chain crosses the membrane as a helical span at residues 100 to 119; the sequence is TFLYLAFAVTECLILVVMSY. The Cytoplasmic portion of the chain corresponds to 120–138; that stretch reads DRYVAICHPFQYTVIMSWR. A helical transmembrane segment spans residues 139–157; the sequence is VCTILVLTSWSCGFALSLV. Residues 158–194 are Extracellular-facing; it reads HEILLLRLPFCGPRDVNHLFCEILSVLKLACADTWVN. Residues 195–218 traverse the membrane as a helical segment; it reads QVVIFATCVFVLVGPLSLILVSYM. The Cytoplasmic segment spans residues 219-235; sequence HILGAILKIQTKEGRIK. Residues 236-258 form a helical membrane-spanning segment; sequence AFSTCSSHLCVVGLFFGIAMVVY. Topologically, residues 259–271 are extracellular; that stretch reads MVPDSNQREEQEK. Residues 272–291 form a helical membrane-spanning segment; that stretch reads MLSLFHSVFNPMLNPLIYSL. Residues 292 to 310 lie on the Cytoplasmic side of the membrane; the sequence is RNAQLKGALHRALQRKRSM.

This sequence belongs to the G-protein coupled receptor 1 family.

It is found in the cell membrane. Its function is as follows. Odorant receptor. In Homo sapiens (Human), this protein is Olfactory receptor 2A2 (OR2A2).